The sequence spans 327 residues: Zinc transport protein ZntB (327 aa).

The Cytoplasmic segment spans residues 1–273; that stretch reads MEAIKGADVN…ARRTYTMSLM (273 aa). The helical transmembrane segment at 274–294 threads the bilayer; that stretch reads AMVFLPSTFLTGLFGVNLGGI. The Periplasmic portion of the chain corresponds to 295 to 300; it reads PGGGWR. A helical membrane pass occupies residues 301–321; the sequence is FGFSLFCILLVVLIGGVALWL. At 322-327 the chain is on the cytoplasmic side; that stretch reads HRSKWL.

It belongs to the CorA metal ion transporter (MIT) (TC 1.A.35) family.

The protein localises to the cell inner membrane. The enzyme catalyses Zn(2+)(out) + H(+)(out) = Zn(2+)(in) + H(+)(in). In terms of biological role, zinc transporter. Acts as a Zn(2+):proton symporter, which likely mediates zinc ion uptake. The polypeptide is Zinc transport protein ZntB (Escherichia fergusonii (strain ATCC 35469 / DSM 13698 / CCUG 18766 / IAM 14443 / JCM 21226 / LMG 7866 / NBRC 102419 / NCTC 12128 / CDC 0568-73)).